The following is a 247-amino-acid chain: MPKVVSRSIVCSDTKDQEEYNEEKPLNIYYCLCNKMALILDCTLEQLPLREVDNARVINANDHANKLTHNPTPRMVYIKRKSRGNGIEKQYRYKCRSCSLPLYYRHSPDSHVTFVMSNALIRNKGESPLTQLLNSEIKGSFKAPAAKPATSAGPDDSGIVDASGKKVVVTRHTKNMGKFSSVTVSTIDEEEDEIEAREIADSYANNARIIEKQLQRKGGKLSDVGIKTKTEDAPPPQKKQRGTLLER.

A Phosphoserine modification is found at Ser-127. Residues 195–216 (EAREIADSYANNARIIEKQLQR) are a coiled coil. A disordered region spans residues 215–247 (QRKGGKLSDVGIKTKTEDAPPPQKKQRGTLLER).

Belongs to the STEEP1 family.

Functionally, molecular adapter that stimulates membrane curvature formation and subsequent endoplasmic reticulum exit site (ERES) establishment by recruiting PI3K complex I, leading to COPII vesicle-mediated transport. The sequence is that of STING ER exit protein from Drosophila melanogaster (Fruit fly).